Consider the following 466-residue polypeptide: MSLSSRATLVVLCCLFMLIPSFTTAATEQGLHARSRCESYSFNNGKSFRSCTDLLVLNSYLHFNYAQETGVLEIAYHHSNLESSSWISWAINPTSKGMVGAQALVAYRNSTSGVMRAYTSSINSYSPMLQESPLSLRVTQVSAEYSNGEMMIFATLVLPPNTTVVNHLWQDGPLKEGDRLGMHAMSGDNLKSMASLDLLSGQVTTTKSVNRNMLLVKQIHAIVNALSWGILMPIGVMAARYMKNYEVLDPTWFYIHVVCQTTGYFSGLIGGLGTAIYMARHTGMRTTLHTVIGLLLFALGFLQILSLKARPNKDHKYRKYWNWYHHTMGYIVIVLSIYNIYKGLSILQPGSIWKIAYTTIICCIAAFAVVMEILQFKKRWARLFFKKSKDVEADQPTVSVDVIGETEKAERKKASGGIEIQIENYNITKNFMIPSVFVISYPHTSPPLLAFHSYHHPSTSIAATAA.

Positions 1-25 (MSLSSRATLVVLCCLFMLIPSFTTA) are cleaved as a signal peptide. Positions 57–172 (LNSYLHFNYA…TVVNHLWQDG (116 aa)) constitute a DOMON domain. In terms of domain architecture, Cytochrome b561 spans 179 to 380 (RLGMHAMSGD…MEILQFKKRW (202 aa)). The next 3 membrane-spanning stretches (helical) occupy residues 219 to 239 (IHAI…VMAA), 252 to 272 (WFYI…IGGL), and 287 to 307 (TLHT…ILSL). 4 residues coordinate heme b: His-220, His-256, His-289, and His-325. The next 2 membrane-spanning stretches (helical) occupy residues 327-347 (TMGY…LSIL) and 355-375 (IAYT…EILQ).

Heme b is required as a cofactor.

Its subcellular location is the membrane. In terms of biological role, may act as a catecholamine-responsive trans-membrane electron transporter. The polypeptide is Cytochrome b561 and DOMON domain-containing protein At3g59070 (Arabidopsis thaliana (Mouse-ear cress)).